Consider the following 188-residue polypeptide: Pyridoxal 5'-phosphate synthase subunit PdxT (188 aa).

46 to 48 (GES) is a binding site for L-glutamine. The active-site Nucleophile is Cys-78. Residues Arg-105 and 134-135 (IR) contribute to the L-glutamine site. Residues His-170 and Glu-172 each act as charge relay system in the active site.

It belongs to the glutaminase PdxT/SNO family. As to quaternary structure, in the presence of PdxS, forms a dodecamer of heterodimers. Only shows activity in the heterodimer.

The catalysed reaction is aldehydo-D-ribose 5-phosphate + D-glyceraldehyde 3-phosphate + L-glutamine = pyridoxal 5'-phosphate + L-glutamate + phosphate + 3 H2O + H(+). The enzyme catalyses L-glutamine + H2O = L-glutamate + NH4(+). It functions in the pathway cofactor biosynthesis; pyridoxal 5'-phosphate biosynthesis. Catalyzes the hydrolysis of glutamine to glutamate and ammonia as part of the biosynthesis of pyridoxal 5'-phosphate. The resulting ammonia molecule is channeled to the active site of PdxS. This chain is Pyridoxal 5'-phosphate synthase subunit PdxT, found in Clostridium kluyveri (strain ATCC 8527 / DSM 555 / NBRC 12016 / NCIMB 10680 / K1).